Consider the following 273-residue polypeptide: Large ribosomal subunit protein uL2 (273 aa).

The tract at residues 222–273 is disordered; that stretch reads GMAMNPVDHPHGGGEGRNKGIQPVSPWGTPAKGYRTRSNKRTDKYIVRRRNK. A compositionally biased stretch (basic and acidic residues) spans 229–239; sequence DHPHGGGEGRN.

This sequence belongs to the universal ribosomal protein uL2 family. As to quaternary structure, part of the 50S ribosomal subunit. Forms a bridge to the 30S subunit in the 70S ribosome.

Functionally, one of the primary rRNA binding proteins. Required for association of the 30S and 50S subunits to form the 70S ribosome, for tRNA binding and peptide bond formation. It has been suggested to have peptidyltransferase activity; this is somewhat controversial. Makes several contacts with the 16S rRNA in the 70S ribosome. This is Large ribosomal subunit protein uL2 from Tolumonas auensis (strain DSM 9187 / NBRC 110442 / TA 4).